Reading from the N-terminus, the 590-residue chain is UvrABC system protein C (590 aa).

The GIY-YIG domain maps to 14 to 91 (DQPGCYLMKD…IKKYDPKYNV (78 aa)). One can recognise a UVR domain in the interval 196–231 (QQIKKELTEKMQEAAEQLEFERAKELRDQIAYIDST).

This sequence belongs to the UvrC family. Interacts with UvrB in an incision complex.

Its subcellular location is the cytoplasm. Its function is as follows. The UvrABC repair system catalyzes the recognition and processing of DNA lesions. UvrC both incises the 5' and 3' sides of the lesion. The N-terminal half is responsible for the 3' incision and the C-terminal half is responsible for the 5' incision. The protein is UvrABC system protein C of Bacillus pumilus (strain SAFR-032).